The sequence spans 343 residues: Twinfilin (343 aa).

ADF-H domains follow at residues glutamine 4–isoleucine 139 and glycine 177–histidine 312. The interval asparagine 317–glutamate 343 is disordered.

The protein belongs to the actin-binding proteins ADF family. Twinfilin subfamily. In terms of assembly, interacts with G-actin; ADP-actin form.

It is found in the cytoplasm. It localises to the cytoskeleton. The protein resides in the cell cortex. Actin-binding protein involved in motile and morphological processes. Inhibits actin polymerization, likely by sequestering G-actin. The protein is Twinfilin (twf) of Aedes aegypti (Yellowfever mosquito).